We begin with the raw amino-acid sequence, 153 residues long: Ribosome maturation factor RimP (153 aa).

This sequence belongs to the RimP family.

Its subcellular location is the cytoplasm. In terms of biological role, required for maturation of 30S ribosomal subunits. This Chromohalobacter salexigens (strain ATCC BAA-138 / DSM 3043 / CIP 106854 / NCIMB 13768 / 1H11) protein is Ribosome maturation factor RimP.